The sequence spans 567 residues: Oxygen-dependent choline dehydrogenase (567 aa).

Residue 6-35 (DYIIVGAGSAGNTLATRLTEDEGVTVLLLE) coordinates FAD. Residue His-475 is the Proton acceptor of the active site.

This sequence belongs to the GMC oxidoreductase family. FAD serves as cofactor.

The catalysed reaction is choline + A = betaine aldehyde + AH2. The enzyme catalyses betaine aldehyde + NAD(+) + H2O = glycine betaine + NADH + 2 H(+). It participates in amine and polyamine biosynthesis; betaine biosynthesis via choline pathway; betaine aldehyde from choline (cytochrome c reductase route): step 1/1. In terms of biological role, involved in the biosynthesis of the osmoprotectant glycine betaine. Catalyzes the oxidation of choline to betaine aldehyde and betaine aldehyde to glycine betaine at the same rate. The protein is Oxygen-dependent choline dehydrogenase of Pseudomonas fluorescens (strain SBW25).